The following is a 239-amino-acid chain: DNA repair protein RecO (239 aa).

The protein belongs to the RecO family.

Involved in DNA repair and RecF pathway recombination. The sequence is that of DNA repair protein RecO from Bifidobacterium longum (strain DJO10A).